We begin with the raw amino-acid sequence, 200 residues long: Thymidine kinase (200 aa).

ATP contacts are provided by residues 15 to 22 and 88 to 91; these read GSMFSGKS and DEVQ. E89 functions as the Proton acceptor in the catalytic mechanism. Positions 145, 148, 183, and 186 each coordinate Zn(2+).

This sequence belongs to the thymidine kinase family. Homotetramer.

The protein resides in the cytoplasm. It catalyses the reaction thymidine + ATP = dTMP + ADP + H(+). In Bacillus pumilus (strain SAFR-032), this protein is Thymidine kinase.